Here is a 345-residue protein sequence, read N- to C-terminus: Protein-arginine kinase (345 aa).

The region spanning 15-245 (LVISSRIRLA…LQIINQEIIS (231 aa)) is the Phosphagen kinase C-terminal domain. ATP contacts are provided by residues 18–22 (SSRIR), histidine 82, arginine 116, 167–171 (RASVM), and 198–203 (RGLYGE). Positions 328–333 (RDFNRA) match the RDXXRA motif of the pArg binding pocket involved in allosteric regulation motif.

This sequence belongs to the ATP:guanido phosphotransferase family.

The enzyme catalyses L-arginyl-[protein] + ATP = N(omega)-phospho-L-arginyl-[protein] + ADP + H(+). With respect to regulation, appears to be allosterically activated by the binding of pArg-containing polypeptides to the pArg-binding pocket localized in the C-terminal domain of McsB. Its function is as follows. Catalyzes the specific phosphorylation of arginine residues in proteins. This Clostridium kluyveri (strain NBRC 12016) protein is Protein-arginine kinase.